Consider the following 208-residue polypeptide: Uridine kinase (208 aa).

An ATP-binding site is contributed by 12-19 (GGSGGGKT).

It belongs to the uridine kinase family.

The protein localises to the cytoplasm. The catalysed reaction is uridine + ATP = UMP + ADP + H(+). It carries out the reaction cytidine + ATP = CMP + ADP + H(+). Its pathway is pyrimidine metabolism; CTP biosynthesis via salvage pathway; CTP from cytidine: step 1/3. It participates in pyrimidine metabolism; UMP biosynthesis via salvage pathway; UMP from uridine: step 1/1. The sequence is that of Uridine kinase from Streptococcus equi subsp. equi (strain 4047).